The chain runs to 179 residues: Large ribosomal subunit protein uL5 (179 aa).

It belongs to the universal ribosomal protein uL5 family. As to quaternary structure, part of the 50S ribosomal subunit; part of the 5S rRNA/L5/L18/L25 subcomplex. Contacts the 5S rRNA and the P site tRNA. Forms a bridge to the 30S subunit in the 70S ribosome.

In terms of biological role, this is one of the proteins that bind and probably mediate the attachment of the 5S RNA into the large ribosomal subunit, where it forms part of the central protuberance. In the 70S ribosome it contacts protein S13 of the 30S subunit (bridge B1b), connecting the 2 subunits; this bridge is implicated in subunit movement. Contacts the P site tRNA; the 5S rRNA and some of its associated proteins might help stabilize positioning of ribosome-bound tRNAs. This chain is Large ribosomal subunit protein uL5, found in Aliivibrio salmonicida (strain LFI1238) (Vibrio salmonicida (strain LFI1238)).